Reading from the N-terminus, the 353-residue chain is Protein XRP2 (353 aa).

Residues 1–37 form a disordered region; the sequence is MGCFFSKKAKRKRNSEEEQPQQDGEEPKQYSWDKREK. A lipid anchor (N-myristoyl glycine) is attached at Gly2. A lipid anchor (S-palmitoyl cysteine) is attached at Cys3. Over residues 25-37 the composition is skewed to basic and acidic residues; that stretch reads EEPKQYSWDKREK. One can recognise a C-CAP/cofactor C-like domain in the interval 27–182; that stretch reads PKQYSWDKRE…TWSNIHDFTP (156 aa). Residues 101 to 102 and 118 to 121 each bind GTP; these read GS and QQFR.

The protein belongs to the TBCC family. Post-translationally, myristoylated on Gly-2; which may be required for membrane targeting. Palmitoylated on Cys-3; which may be required for plasma membrane targeting.

It localises to the cell membrane. Functionally, acts as a GTPase-activating protein (GAP) for tubulin in concert with tubulin-specific chaperone C, but does not enhance tubulin heterodimerization. Acts as a GTPase-activating protein. May act as guanine nucleotide dissociation inhibitor towards ADP-ribosylation factor-like proteins. The sequence is that of Protein XRP2 (rp2) from Xenopus laevis (African clawed frog).